A 350-amino-acid polypeptide reads, in one-letter code: Protein XRP2 (350 aa).

Residues Met-1 to Lys-10 show a composition bias toward basic residues. The disordered stretch occupies residues Met-1–Gln-31. Gly-2 carries the N-myristoyl glycine lipid modification. A lipid anchor (S-palmitoyl cysteine) is attached at Cys-3. Positions Ala-11–Gln-31 are enriched in basic and acidic residues. The region spanning Pro-24–Pro-179 is the C-CAP/cofactor C-like domain. GTP-binding positions include Gly-98–Ser-99 and Gln-115–Arg-118.

The protein belongs to the TBCC family. In terms of assembly, found in a complex with ARL3, RP2 and UNC119 (or UNC119B); RP2 induces hydrolysis of GTP ARL3 in the complex, leading to the release of UNC119 (or UNC119B). Interacts with ARL3; interaction is direct and stimulated with the activated GTP-bound form of ARL3. Post-translationally, myristoylated on Gly-2; which may be required for membrane targeting. In terms of processing, palmitoylated on Cys-3; which may be required for plasma membrane targeting. Mutation of Cys-3 targets the protein to internal membranes. In terms of tissue distribution, ubiquitous. Expressed in the rod and cone photoreceptors, extending from the tips of the outer segment (OS) through the inner segment (IS) and outer nuclear layer (ONL) and into the synaptic terminals of the outer plexiform layer (ONL). Also detected in the bipolar, horizontal and amacrine cells in the inner nuclear layer (INL), extending to the inner plexiform layer (IPL) and though the ganglion cell layer (GCL) and into the nerve fiber layer (NFL) (at protein level).

The protein localises to the cell membrane. It is found in the cell projection. The protein resides in the cilium. Acts as a GTPase-activating protein (GAP) involved in trafficking between the Golgi and the ciliary membrane. Involved in localization of proteins, such as NPHP3, to the cilium membrane by inducing hydrolysis of GTP ARL3, leading to the release of UNC119 (or UNC119B). Acts as a GTPase-activating protein (GAP) for tubulin in concert with tubulin-specific chaperone C, but does not enhance tubulin heterodimerization. Acts as a guanine nucleotide dissociation inhibitor towards ADP-ribosylation factor-like proteins. This is Protein XRP2 (RP2) from Homo sapiens (Human).